A 292-amino-acid chain; its full sequence is Poly(U)-specific endoribonuclease-A (292 aa).

One can recognise an EndoU domain in the interval 8 to 285; sequence LNHELSKLFN…IGTAYPVLLS (278 aa). Catalysis depends on residues His-162, His-178, and Lys-224.

Belongs to the ENDOU family. In terms of assembly, monomer. Mn(2+) serves as cofactor.

It is found in the nucleus. It carries out the reaction uridylyl-uridylyl-ribonucleotide-RNA = a 3'-end uridylyl-2',3'-cyclophospho-uridine-RNA + a 5'-end dephospho-ribonucleoside-RNA. In terms of biological role, poly(U)-specific endoribonuclease involved in the processing of intron-encoded box C/D snoRNAs, such as U16 and U86. Releases products that have 2',3'-cyclic phosphate termini at the 3'-end. The polypeptide is Poly(U)-specific endoribonuclease-A (endou-a) (Xenopus laevis (African clawed frog)).